The following is a 494-amino-acid chain: Subtilisin-like serine protease EN45_078720 (494 aa).

The signal sequence occupies residues 1 to 16 (MKGFLSLTLLPLLVAA). Positions 17-136 (SPVAVNSIHN…IEKDSEVRTM (120 aa)) are cleaved as a propeptide — removed in mature form. The region spanning 43 to 136 (SYIVVFKKHV…IEKDSEVRTM (94 aa)) is the Inhibitor I9 domain. In terms of domain architecture, Peptidase S8 spans 146–448 (PWGLARISHR…GGSANYTKIL (303 aa)). IgE-binding regions lie at residues 180–198 (VIDTGANVKHVDFEGRANW) and 209–231 (EDGNGHGTHCSGTIAGKKFGVAK). Residues aspartate 182 and histidine 214 each act as charge relay system in the active site. N-linked (GlcNAc...) asparagine glycosylation is found at asparagine 244 and asparagine 280. The active-site Charge relay system is serine 376. Asparagine 443 carries N-linked (GlcNAc...) asparagine glycosylation. A propeptide spans 454-494 (KAHNAETTVEDRIGGIIDSAEKAFHKELGAIYSEIKDAVSA) (removed in mature form).

This sequence belongs to the peptidase S8 family.

In terms of biological role, serine protease. The polypeptide is Subtilisin-like serine protease EN45_078720 (Penicillium chrysogenum (Penicillium notatum)).